Consider the following 508-residue polypeptide: Steroid 17-alpha-hydroxylase/17,20 lyase (508 aa).

A substrate-binding site is contributed by N202. C442 is a binding site for heme.

Belongs to the cytochrome P450 family. Heme is required as a cofactor. In terms of processing, phosphorylation is necessary for 17,20-lyase, but not for 17-alpha-hydroxylase activity.

It localises to the endoplasmic reticulum membrane. It is found in the microsome membrane. It carries out the reaction a C21-steroid + reduced [NADPH--hemoprotein reductase] + O2 = a 17alpha-hydroxy-C21-steroid + oxidized [NADPH--hemoprotein reductase] + H2O + H(+). The enzyme catalyses progesterone + reduced [NADPH--hemoprotein reductase] + O2 = 17alpha-hydroxyprogesterone + oxidized [NADPH--hemoprotein reductase] + H2O + H(+). It catalyses the reaction pregnenolone + reduced [NADPH--hemoprotein reductase] + O2 = 17alpha-hydroxypregnenolone + oxidized [NADPH--hemoprotein reductase] + H2O + H(+). The catalysed reaction is 17alpha-hydroxyprogesterone + reduced [NADPH--hemoprotein reductase] + O2 = androst-4-ene-3,17-dione + acetate + oxidized [NADPH--hemoprotein reductase] + H2O + 2 H(+). It carries out the reaction 17alpha-hydroxyprogesterone + reduced [NADPH--hemoprotein reductase] + O2 = 16alpha,17alpha-dihydroxyprogesterone + oxidized [NADPH--hemoprotein reductase] + H2O + H(+). The enzyme catalyses 16alpha,17alpha-dihydroxyprogesterone + reduced [NADPH--hemoprotein reductase] + O2 = 6beta,16alpha,17alpha-trihydroxyprogesterone + oxidized [NADPH--hemoprotein reductase] + H2O + H(+). It catalyses the reaction 17alpha-hydroxypregnenolone + reduced [NADPH--hemoprotein reductase] + O2 = 3beta-hydroxyandrost-5-en-17-one + acetate + oxidized [NADPH--hemoprotein reductase] + H2O + 2 H(+). The catalysed reaction is 16alpha,17alpha-dihydroxypregnenolone + reduced [NADPH--hemoprotein reductase] + O2 = 3beta,16alpha-dihydroxy-androst-5-en-17-one + acetate + oxidized [NADPH--hemoprotein reductase] + H2O + 2 H(+). It carries out the reaction 3beta-hydroxyandrost-5-en-17-one + reduced [NADPH--hemoprotein reductase] + O2 = 3beta,16alpha-dihydroxy-androst-5-en-17-one + oxidized [NADPH--hemoprotein reductase] + H2O + H(+). The enzyme catalyses androst-4-ene-3,17-dione + reduced [NADPH--hemoprotein reductase] + O2 = 16alpha-hydroxyandrost-4-ene-3,17-dione + oxidized [NADPH--hemoprotein reductase] + H2O + H(+). The protein operates within steroid hormone biosynthesis. Its pathway is steroid biosynthesis; glucocorticoid biosynthesis. Its activity is regulated as follows. Regulated predominantly by intracellular cAMP levels. The 17,20-lyase activity is stimulated by cytochrome b5, which acts as an allosteric effector increasing the Vmax of the lyase activity. Functionally, a cytochrome P450 monooxygenase involved in corticoid and androgen biosynthesis. Catalyzes 17-alpha hydroxylation of C21 steroids, which is common for both pathways. A second oxidative step, required only for androgen synthesis, involves an acyl-carbon cleavage. The 17-alpha hydroxy intermediates, as part of adrenal glucocorticoids biosynthesis pathway, are precursors of cortisol. Hydroxylates steroid hormones, pregnenolone and progesterone to form 17-alpha hydroxy metabolites, followed by the cleavage of the C17-C20 bond to form C19 steroids, dehydroepiandrosterone (DHEA) and androstenedione. Has 16-alpha hydroxylase activity. Catalyzes 16-alpha hydroxylation of 17-alpha hydroxy pregnenolone, followed by the cleavage of the C17-C20 bond to form 16-alpha-hydroxy DHEA. Also 16-alpha hydroxylates androgens, relevant for estriol synthesis. Mechanistically, uses molecular oxygen inserting one oxygen atom into a substrate, and reducing the second into a water molecule, with two electrons provided by NADPH via cytochrome P450 reductase (CPR; NADPH-ferrihemoprotein reductase). This chain is Steroid 17-alpha-hydroxylase/17,20 lyase, found in Homo sapiens (Human).